The following is a 99-amino-acid chain: Plastocyanin (99 aa).

The Plastocyanin-like domain maps to 1 to 99 (IEVLLGGDDG…AGMVGKVTVN (99 aa)). Residues His37, Cys84, His87, and Met92 each contribute to the Cu cation site.

This sequence belongs to the plastocyanin family. It depends on Cu(2+) as a cofactor.

It localises to the plastid. It is found in the chloroplast thylakoid membrane. Functionally, participates in electron transfer between P700 and the cytochrome b6-f complex in photosystem I. The polypeptide is Plastocyanin (PETE) (Cucurbita pepo (Vegetable marrow)).